A 43-amino-acid chain; its full sequence is Protein PsbN (43 aa).

A helical membrane pass occupies residues 5–27 (TVLSIFISSLLLGITGYSIYTAF).

Belongs to the PsbN family.

Its subcellular location is the plastid. The protein resides in the chloroplast thylakoid membrane. Functionally, may play a role in photosystem I and II biogenesis. This is Protein PsbN from Porphyra purpurea (Red seaweed).